Reading from the N-terminus, the 103-residue chain is uncharacterized protein (103 aa).

2 stretches are compositionally biased toward polar residues: residues Met-1–Tyr-10 and Thr-18–Tyr-28. Residues Met-1 to Tyr-28 are disordered.

This is an uncharacterized protein from Acanthamoeba polyphaga mimivirus (APMV).